A 273-amino-acid chain; its full sequence is Phosphate import ATP-binding protein PstB (273 aa).

An ABC transporter domain is found at 19 to 258; sequence ISIQNVTISY…FNETEKIFNS (240 aa). 51–58 contacts ATP; it reads GPSGCGKS.

The protein belongs to the ABC transporter superfamily. Phosphate importer (TC 3.A.1.7) family. As to quaternary structure, the complex is composed of two ATP-binding proteins (PstB), two transmembrane proteins (PstC and PstA) and a solute-binding protein (PstS).

The protein resides in the cell inner membrane. It catalyses the reaction phosphate(out) + ATP + H2O = ADP + 2 phosphate(in) + H(+). In terms of biological role, part of the ABC transporter complex PstSACB involved in phosphate import. Responsible for energy coupling to the transport system. This chain is Phosphate import ATP-binding protein PstB, found in Parasynechococcus marenigrum (strain WH8102).